We begin with the raw amino-acid sequence, 355 residues long: MASRQGPLCGLAPCCLWLLGVILLMNASARPANHSSARERAGNREENEILPPDHLNGVKLEMDGHLNKDFHQEVFLGKDMDDFEEDAEPRKSRRKLMVIFSKVDLNTDRRISAKEMQKWIMQKTAEHFQEAVAESRAHFRAVDPDGDGHVSWDEYKVKFLATKGHNEREVAEKIKNKWDLNIDEETQEVLENLKDRWYQADNPPPDLLLTESEFLSFLHPEHSRGMLQFMVKEIIRDLDQDGDKKLSLSEFISLPVGTVENQQGQDVDDGWVRDRKREFEELIDANHDGIVTMAELEDYMDPMNEFSALNEAKQMIAIADENQNHYLEPEEVLKYSEFFTGSKLVDYARSVHEEF.

Residues 1–29 (MASRQGPLCGLAPCCLWLLGVILLMNASA) form the signal peptide. Asn26 is a glycosylation site (N-linked (GlcNAc...) asparagine). 2 EF-hand domains span residues 91 to 126 (KSRRKLMVIFSKVDLNTDRRISAKEMQKWIMQKTAE) and 130 to 165 (EAVAESRAHFRAVDPDGDGHVSWDEYKVKFLATKGH). Position 92 is a phosphoserine (Ser92). Ca(2+) is bound by residues Asp104, Asn106, Asp108, Arg110, Glu115, Asp143, Asp145, Asp147, His149, and Glu154. Thr186 and Thr210 each carry phosphothreonine. EF-hand domains lie at 226–261 (MLQFMVKEIIRDLDQDGDKKLSLSEFISLPVGTVEN), 271–306 (WVRDRKREFEELIDANHDGIVTMAELEDYMDPMNEF), and 307–342 (SALNEAKQMIAIADENQNHYLEPEEVLKYSEFFTGS). Asp239, Asp241, Asp243, Lys245, and Glu250 together coordinate Ca(2+). The residue at position 258 (Thr258) is a Phosphothreonine. The Ca(2+) site is built by Asp284, Asn286, and Asp288. Residue Thr292 is modified to Phosphothreonine. Residues Glu295, Asp320, Asn322, Asn324, Tyr326, and Glu331 each contribute to the Ca(2+) site. The tract at residues 302-355 (PMNEFSALNEAKQMIAIADENQNHYLEPEEVLKYSEFFTGSKLVDYARSVHEEF) is necessary for intracellular retention in Golgi apparatus lumen.

This sequence belongs to the CREC family.

It localises to the golgi apparatus lumen. Its function is as follows. May regulate calcium-dependent activities in the endoplasmic reticulum lumen or post-ER compartment. The chain is 45 kDa calcium-binding protein (SDF4) from Capra hircus (Goat).